The sequence spans 334 residues: Probable 2-ketogluconate reductase (334 aa).

Residues 164-165 (RI), 244-246 (AGR), and aspartate 270 contribute to the NAD(+) site. Arginine 246 is an active-site residue. Glutamate 275 is a catalytic residue. Histidine 294 acts as the Proton donor in catalysis. 294–297 (HIGT) provides a ligand contact to NAD(+).

The protein belongs to the D-isomer specific 2-hydroxyacid dehydrogenase family.

The protein localises to the cytoplasm. It carries out the reaction D-gluconate + NADP(+) = 2-dehydro-D-gluconate + NADPH + H(+). Its function is as follows. Catalyzes the NADPH-dependent reduction of 2,5-diketo-D-gluconate (25DKG) to 5-keto-D-gluconate (5KDG), 2-keto-D-gluconate (2KDG) to D-gluconate, and 2-keto-L-gulonate (2KLG) to L-idonate (IA). The sequence is that of Probable 2-ketogluconate reductase (tkrA) from Dictyostelium discoideum (Social amoeba).